A 399-amino-acid polypeptide reads, in one-letter code: Tyrosine--tRNA ligase (399 aa).

The short motif at 42 to 51 (PTAPDLHLGH) is the 'HIGH' region element. The 'KMSKS' region motif lies at 226–230 (KMSKS). ATP is bound at residue Lys229. The S4 RNA-binding domain occupies 337 to 398 (LPVFQVVKQA…GKRKFASVVL (62 aa)).

The protein belongs to the class-I aminoacyl-tRNA synthetase family. TyrS type 2 subfamily. Homodimer.

The protein localises to the cytoplasm. It catalyses the reaction tRNA(Tyr) + L-tyrosine + ATP = L-tyrosyl-tRNA(Tyr) + AMP + diphosphate + H(+). Functionally, catalyzes the attachment of tyrosine to tRNA(Tyr) in a two-step reaction: tyrosine is first activated by ATP to form Tyr-AMP and then transferred to the acceptor end of tRNA(Tyr). This is Tyrosine--tRNA ligase from Aromatoleum aromaticum (strain DSM 19018 / LMG 30748 / EbN1) (Azoarcus sp. (strain EbN1)).